Here is a 329-residue protein sequence, read N- to C-terminus: uncharacterized protein (329 aa).

2 consecutive transmembrane segments (helical) span residues 13 to 35 and 229 to 248; these read IPVL…WATI and VIPA…SVVY.

It is found in the cell membrane. This is an uncharacterized protein from Archaeoglobus fulgidus (strain ATCC 49558 / DSM 4304 / JCM 9628 / NBRC 100126 / VC-16).